We begin with the raw amino-acid sequence, 92 residues long: Small ribosomal subunit protein uS19 (92 aa).

Belongs to the universal ribosomal protein uS19 family.

Protein S19 forms a complex with S13 that binds strongly to the 16S ribosomal RNA. The polypeptide is Small ribosomal subunit protein uS19 (Polaromonas naphthalenivorans (strain CJ2)).